Reading from the N-terminus, the 297-residue chain is Probable GTP 3',8-cyclase (297 aa).

In terms of domain architecture, Radical SAM core spans 4–220; sequence EFGREIRSFR…VVTRKFMQNR (217 aa). GTP is bound at residue Arg-13. Residues Cys-20 and Cys-24 each contribute to the [4Fe-4S] cluster site. Residue Tyr-26 participates in S-adenosyl-L-methionine binding. Cys-27 serves as a coordination point for [4Fe-4S] cluster. Lys-61 serves as a coordination point for GTP. Residue Gly-65 coordinates S-adenosyl-L-methionine. Position 91 (Thr-91) interacts with GTP. S-adenosyl-L-methionine is bound at residue Ser-115. Residue Lys-151 coordinates GTP. [4Fe-4S] cluster is bound by residues Cys-242 and Cys-245. A GTP-binding site is contributed by 247–249; that stretch reads RIR. [4Fe-4S] cluster is bound at residue Cys-259.

It belongs to the radical SAM superfamily. MoaA family. [4Fe-4S] cluster is required as a cofactor.

It catalyses the reaction GTP + AH2 + S-adenosyl-L-methionine = (8S)-3',8-cyclo-7,8-dihydroguanosine 5'-triphosphate + 5'-deoxyadenosine + L-methionine + A + H(+). The protein operates within cofactor biosynthesis; molybdopterin biosynthesis. In terms of biological role, catalyzes the cyclization of GTP to (8S)-3',8-cyclo-7,8-dihydroguanosine 5'-triphosphate. The protein is Probable GTP 3',8-cyclase of Methanococcus vannielii (strain ATCC 35089 / DSM 1224 / JCM 13029 / OCM 148 / SB).